A 284-amino-acid chain; its full sequence is Pantothenate synthetase (284 aa).

30–37 (MGNLHDGH) is a binding site for ATP. Histidine 37 serves as the catalytic Proton donor. Glutamine 61 lines the (R)-pantoate pocket. Glutamine 61 contributes to the beta-alanine binding site. ATP is bound at residue 149–152 (GEKD). (R)-pantoate is bound at residue glutamine 155. ATP-binding positions include isoleucine 178 and 186 to 189 (LSSR).

It belongs to the pantothenate synthetase family. As to quaternary structure, homodimer.

The protein resides in the cytoplasm. The enzyme catalyses (R)-pantoate + beta-alanine + ATP = (R)-pantothenate + AMP + diphosphate + H(+). It participates in cofactor biosynthesis; (R)-pantothenate biosynthesis; (R)-pantothenate from (R)-pantoate and beta-alanine: step 1/1. In terms of biological role, catalyzes the condensation of pantoate with beta-alanine in an ATP-dependent reaction via a pantoyl-adenylate intermediate. This Salmonella paratyphi B (strain ATCC BAA-1250 / SPB7) protein is Pantothenate synthetase.